The chain runs to 399 residues: Elongation factor Tu (399 aa).

Residues 10–204 form the tr-type G domain; that stretch reads KPHVNIGTIG…AVDASIPEPE (195 aa). The interval 19–26 is G1; it reads GHVDHGKT. Residue 19-26 participates in GTP binding; it reads GHVDHGKT. Thr-26 is a Mg(2+) binding site. Positions 60 to 64 are G2; the sequence is GITIN. Positions 81-84 are G3; that stretch reads DCPG. Residues 81-85 and 136-139 each bind GTP; these read DCPGH and NKCD. The G4 stretch occupies residues 136–139; that stretch reads NKCD. The tract at residues 174 to 176 is G5; it reads SGL.

Belongs to the TRAFAC class translation factor GTPase superfamily. Classic translation factor GTPase family. EF-Tu/EF-1A subfamily. Monomer.

Its subcellular location is the cytoplasm. The enzyme catalyses GTP + H2O = GDP + phosphate + H(+). Functionally, GTP hydrolase that promotes the GTP-dependent binding of aminoacyl-tRNA to the A-site of ribosomes during protein biosynthesis. In Prochlorococcus marinus (strain AS9601), this protein is Elongation factor Tu.